We begin with the raw amino-acid sequence, 260 residues long: Ras-related protein Rab-32B (260 aa).

The segment at 11–50 is disordered; sequence FDTDPDVSTDSNYNNNNNSNNNNSIISNSNNNNNNNNNNV. The segment covering 21-49 has biased composition (low complexity); that stretch reads SNYNNNNNSNNNNSIISNSNNNNNNNNNN. GTP is bound at residue 66–73; sequence GDYAVGKS. The short motif at 88–96 is the Effector region element; sequence YKLTIGVDF. GTP contacts are provided by residues 115–119 and 177–180; these read DIAGH and NKSD. The disordered stretch occupies residues 231-260; the sequence is TNHPPKPEEDTLELTKTNGEKSDDSKSCCK. The span at 248-260 shows a compositional bias: basic and acidic residues; the sequence is NGEKSDDSKSCCK. S-geranylgeranyl cysteine attachment occurs at residues C258 and C259.

Belongs to the small GTPase superfamily. Rab family.

The sequence is that of Ras-related protein Rab-32B (rab32B) from Dictyostelium discoideum (Social amoeba).